Consider the following 221-residue polypeptide: Leucine rich adaptor protein 1-like (221 aa).

N-acetylmethionine is present on Met-1. The interval 24 to 81 (LARSLRGEELAPREGAADPSGVGGSCSSSSSCSSFAPSVSSSSSSSPASGSPRRSHPS) is disordered. Residues 28–39 (LRGEELAPREGA) are compositionally biased toward basic and acidic residues. The span at 48–75 (SCSSSSSCSSFAPSVSSSSSSSPASGSP) shows a compositional bias: low complexity.

The polypeptide is Leucine rich adaptor protein 1-like (Lurap1l) (Mus musculus (Mouse)).